The following is a 306-amino-acid chain: MNDYNHYFHFPREEWRKLEVSKDQILTAEELEEIRGLNDRISLQDISEIYLPLIKLIAIQYHEAIFIHGEKMEYLKKKESRAPFIIALAGSVAVGKSTTARVFKLMLDRWFSKTRQVELVTTDGFLYPNKVLEERGIMDKKGFPESYDRDRFAKFLTDLKANKEDVEVPLYSHFTYDVLDETRMMHNPDIVIIEGINVLQADQHESLYPSDFFDFSVYMDANEADIKNWYLERFFMLRETAFQDESSYFHPYTKISKKEAETFALGVWDTINGVNLKENIEKTKYRADLVLHKGTDHLISDIYLRK.

90 to 97 (GSVAVGKS) contacts ATP.

Belongs to the prokaryotic pantothenate kinase family.

It is found in the cytoplasm. It carries out the reaction (R)-pantothenate + ATP = (R)-4'-phosphopantothenate + ADP + H(+). Its pathway is cofactor biosynthesis; coenzyme A biosynthesis; CoA from (R)-pantothenate: step 1/5. The polypeptide is Pantothenate kinase (coaA) (Listeria innocua serovar 6a (strain ATCC BAA-680 / CLIP 11262)).